Here is a 723-residue protein sequence, read N- to C-terminus: LPS-assembly protein LptD (723 aa).

The N-terminal stretch at 1–23 (MNTLKLCLILYACLVLLPVRVMS) is a signal peptide.

This sequence belongs to the LptD family. As to quaternary structure, component of the lipopolysaccharide transport and assembly complex. Interacts with LptE and LptA.

It localises to the cell outer membrane. Together with LptE, is involved in the assembly of lipopolysaccharide (LPS) at the surface of the outer membrane. This is LPS-assembly protein LptD from Nitrosomonas europaea (strain ATCC 19718 / CIP 103999 / KCTC 2705 / NBRC 14298).